A 141-amino-acid polypeptide reads, in one-letter code: uncharacterized protein (141 aa).

The next 4 membrane-spanning stretches (helical) occupy residues 7-24 (YRIP…FLSP), 39-56 (FLKF…HRGI), 69-91 (FYLI…ILGF), and 116-138 (FFIL…SSFI).

The protein localises to the cell membrane. This is an uncharacterized protein from Aquifex aeolicus (strain VF5).